We begin with the raw amino-acid sequence, 850 residues long: MAAAAPAAAAASSEAPAASATAEPEAGDQDSREVRVLQSLRGKICEAKNLLPYLGPHKMRDCFCTINLDQEEVYRTQVVEKSLSPFFSEEFYFEIPRTFQYLSFYVYDKNVLQRDLRIGKVAIKKEDLCNHSGKETWFSLQPVDSNSEVQGKVHLELKLNELITENGTVCQQLVVHIKACHGLPLINGQSCDPYATVSLVGPSRNDQKKTKVKKKTSNPQFNEIFYFEVTRSSSYTRKSQFQVEEEDIEKLEIRIDLWNNGNLVQDVFLGEIKVPVNVLRTDSSHQAWYLLQPRDNGNKSSKTDDLGSLRLNICYTEDYVLPSEYYGPLKTLLLKSPDVQPISASAAYILSEICRDKNDAVLPLVRLLLHHDKLVPFATAVAELDLKDTQDANTIFRGNSLATRCLDEMMKIVGGHYLKVTLKPILDEICDSSKSCEIDPIKLKEGDNVENNKENLRYYVDKLFNTIVKSSMSCPTVMCDIFYSLRQMATQRFPNDPHVQYSAVSSFVFLRFFAVAVVSPHTFHLRPHHPDAQTIRTLTLISKTIQTLGSWGSLSKSKSSFKETFMCEFFKMFQEEGYIIAVKKFLDEISSTETKESSGTSEPVHLKEGEMYKRAQGRTRIGKKNFKKRWFCLTSRELTYHKQPGSKDAIYTIPVKNILAVEKLEESSFNKKNMFQVIHTEKPLYVQANNCVEANEWIDVLCRVSRCNQNRLSFYHPSVYLNGNWLCCQETGENTLGCKPCTAGVPADIQIDIDEDRETERIYSLFTLSLLKLQKMEEACGTIAVYQGPQKEPDDYSNFVIEDSVTTFKTIQQIKSIIEKLDEPHEKYRKKRSSSAKYGSKENPIVGKAS.

Positions Met-1–Pro-24 are enriched in low complexity. Residues Met-1–Arg-32 are disordered. An N-acetylalanine modification is found at Ala-2. 2 C2 domains span residues Ala-20 to Phe-138 and Val-149 to Tyr-289. The 218-residue stretch at Asp-372–Ile-589 folds into the Ras-GAP domain. Ser-555 carries the phosphoserine modification. A PH domain is found at Val-604 to Arg-706. A Btk-type zinc finger spans residues Asn-708–Gly-744. Zn(2+) contacts are provided by His-716, Cys-727, Cys-728, and Cys-738. The disordered stretch occupies residues His-825–Ser-850.

It is found in the cytoplasm. The protein localises to the perinuclear region. In terms of biological role, inhibitory regulator of the Ras-cyclic AMP pathway. Binds inositol tetrakisphosphate (IP4). This Homo sapiens (Human) protein is Ras GTPase-activating protein 2 (RASA2).